We begin with the raw amino-acid sequence, 367 residues long: Gelsolin-like protein 1 (367 aa).

The actin binding stretch occupies residues 1–185; sequence MATGLIKAKE…GQKQQIYVHE (185 aa). Gelsolin-like repeat units follow at residues 56-141 and 179-225; these read NFKV…ELFR and QQIY…KAMQ. Residues 106–109 form an actin-actin interfilament contact point region; sequence DEYG. The actin binding, Actin-severing stretch occupies residues 186 to 295; it reads VPLVKERLDH…LKTTEVKRGA (110 aa). The tract at residues 235–257 is disordered; the sequence is PKAEAETLEDESTPESHKFYTSL. The Gelsolin-like 3 repeat unit spans residues 287–322; that stretch reads KTTEVKRGAVNSKDFSSNDVFILDTGDQCFVWVGKG. The actin-severing, Ca-sensitive stretch occupies residues 296 to 366; it reads VNSKDFSSND…LCKAFNVAIA (71 aa).

This sequence belongs to the villin/gelsolin family. As to quaternary structure, interacts with actin monomers and filaments. In terms of tissue distribution, expressed in circular and longitudinal muscle, pseudohearts, pharynx and gizzard. Also expressed in male germ cells at the proximal pole of primary spermatocytes in 16 cell-stage morulae, and in the distal parts of the spermatocytes in 32 and 64 cell-stage morulae. In the spermatids of the 128 cell-stage morulae it is expressed at the proximal pole of the elongated nucleus and the distal pole near the base of the flagellae.

The protein localises to the cytoplasm. The protein resides in the cytoskeleton. Calcium-regulated protein that binds to the plus (or barbed) ends of actin monomers or filaments, preventing monomer exchange (end-blocking or capping). Can promote the assembly of monomers into filaments (nucleation) as well as sever existing filaments. In Lumbricus terrestris (Common earthworm), this protein is Gelsolin-like protein 1.